The chain runs to 429 residues: Argininosuccinate lyase (429 aa).

This sequence belongs to the lyase 1 family. Argininosuccinate lyase subfamily.

Its subcellular location is the cytoplasm. It catalyses the reaction 2-(N(omega)-L-arginino)succinate = fumarate + L-arginine. It participates in amino-acid biosynthesis; L-arginine biosynthesis; L-arginine from L-ornithine and carbamoyl phosphate: step 3/3. The chain is Argininosuccinate lyase from Pyrobaculum neutrophilum (strain DSM 2338 / JCM 9278 / NBRC 100436 / V24Sta) (Thermoproteus neutrophilus).